The chain runs to 333 residues: Protein-methionine-sulfoxide reductase catalytic subunit MsrP (333 aa).

Positions 1-43 form a signal peptide, tat-type signal; sequence MSKQRKLTEADVTPESVFYQRRKVLQALGITAASLALPHNAQA. Residues Asn-87, 90–91, Cys-145, Thr-180, Asn-232, Arg-237, and 248–250 each bind Mo-molybdopterin; these read YE and GIK.

This sequence belongs to the MsrP family. Heterodimer of a catalytic subunit (MsrP) and a heme-binding subunit (MsrQ). It depends on Mo-molybdopterin as a cofactor. In terms of processing, predicted to be exported by the Tat system. The position of the signal peptide cleavage has not been experimentally proven.

It is found in the periplasm. It carries out the reaction L-methionyl-[protein] + a quinone + H2O = L-methionyl-(S)-S-oxide-[protein] + a quinol. It catalyses the reaction L-methionyl-[protein] + a quinone + H2O = L-methionyl-(R)-S-oxide-[protein] + a quinol. Its function is as follows. Part of the MsrPQ system that repairs oxidized periplasmic proteins containing methionine sulfoxide residues (Met-O), using respiratory chain electrons. Thus protects these proteins from oxidative-stress damage caused by reactive species of oxygen and chlorine generated by the host defense mechanisms. MsrPQ is essential for the maintenance of envelope integrity under bleach stress, rescuing a wide series of structurally unrelated periplasmic proteins from methionine oxidation. The catalytic subunit MsrP is non-stereospecific, being able to reduce both (R-) and (S-) diastereoisomers of methionine sulfoxide. This chain is Protein-methionine-sulfoxide reductase catalytic subunit MsrP, found in Serratia proteamaculans (strain 568).